Reading from the N-terminus, the 515-residue chain is GMP synthase [glutamine-hydrolyzing] (515 aa).

Residues 6–198 enclose the Glutamine amidotransferase type-1 domain; the sequence is KVIIIDYGSQ…LFHVAKLKAD (193 aa). Cys83 acts as the Nucleophile in catalysis. Active-site residues include His172 and Glu174. The GMPS ATP-PPase domain occupies 199 to 390; that stretch reads WTMSSFVERA…LGLPDFIIWR (192 aa). 226–232 provides a ligand contact to ATP; sequence SGGIDST.

As to quaternary structure, homodimer.

It catalyses the reaction XMP + L-glutamine + ATP + H2O = GMP + L-glutamate + AMP + diphosphate + 2 H(+). It participates in purine metabolism; GMP biosynthesis; GMP from XMP (L-Gln route): step 1/1. In terms of biological role, catalyzes the synthesis of GMP from XMP. The polypeptide is GMP synthase [glutamine-hydrolyzing] (Nitratidesulfovibrio vulgaris (strain DP4) (Desulfovibrio vulgaris)).